Reading from the N-terminus, the 120-residue chain is ATP-dependent Clp protease adapter protein ClpS (120 aa).

Belongs to the ClpS family. As to quaternary structure, binds to the N-terminal domain of the chaperone ClpA.

In terms of biological role, involved in the modulation of the specificity of the ClpAP-mediated ATP-dependent protein degradation. The protein is ATP-dependent Clp protease adapter protein ClpS of Pseudomonas syringae pv. tomato (strain ATCC BAA-871 / DC3000).